The sequence spans 547 residues: Aspartate 1-decarboxylase (547 aa).

Lys338 is subject to N6-(pyridoxal phosphate)lysine.

Belongs to the group II decarboxylase family. Requires pyridoxal 5'-phosphate as cofactor.

It carries out the reaction L-aspartate + H(+) = beta-alanine + CO2. The protein operates within cofactor biosynthesis; (R)-pantothenate biosynthesis; beta-alanine from L-aspartate: step 1/1. In terms of biological role, catalyzes the pyridoxal-dependent decarboxylation of aspartate to produce beta-alanine. Has weak activity with glutamate. The protein is Aspartate 1-decarboxylase of Aliivibrio fischeri (strain ATCC 700601 / ES114) (Vibrio fischeri).